A 439-amino-acid polypeptide reads, in one-letter code: Serine/threonine-protein kinase 2 (439 aa).

The Protein kinase domain occupies 87–439 (NDDFYHISTG…IFSDWINGGN (353 aa)). Residues 93–101 (ISTGGYGIV) and Lys-117 contribute to the ATP site. The Proton acceptor role is filled by Asp-307.

It belongs to the protein kinase superfamily. Ser/Thr protein kinase family. Poxviruses subfamily. Phosphorylated in vivo. Autophosphorylated in vitro.

Its subcellular location is the host endoplasmic reticulum. It is found in the host endoplasmic reticulum-Golgi intermediate compartment. The enzyme catalyses L-seryl-[protein] + ATP = O-phospho-L-seryl-[protein] + ADP + H(+). The catalysed reaction is L-threonyl-[protein] + ATP = O-phospho-L-threonyl-[protein] + ADP + H(+). Functionally, essential serine-protein kinase involved in the early stage of virion morphogenesis. The protein is Serine/threonine-protein kinase 2 (OPG054) of Vaccinia virus (strain Copenhagen) (VACV).